The chain runs to 320 residues: 1-aminocyclopropane-1-carboxylate oxidase (320 aa).

The 101-residue stretch at 156-256 (PTFGTKVSNY…RMSIASFYNP (101 aa)) folds into the Fe2OG dioxygenase domain. 3 residues coordinate Fe cation: His180, Asp182, and His237.

The protein belongs to the iron/ascorbate-dependent oxidoreductase family. The cofactor is Fe cation.

It carries out the reaction 1-aminocyclopropane-1-carboxylate + L-ascorbate + O2 = ethene + L-dehydroascorbate + hydrogen cyanide + CO2 + 2 H2O. It functions in the pathway alkene biosynthesis; ethylene biosynthesis via S-adenosyl-L-methionine; ethylene from S-adenosyl-L-methionine: step 2/2. This chain is 1-aminocyclopropane-1-carboxylate oxidase (ACO), found in Brassica juncea (Indian mustard).